A 471-amino-acid chain; its full sequence is MKIKTRFAPSPTGYLHVGGARTALYSWLFARNHGGEFVLRIEDTDLERSTPEAIEAIMDGMNWLSLEWDEGPYFQTKRFDRYNAVIDQMLEEGTAYKCYCSKERLEALREEQMAKGEKPRYDDRCRHSHEHHADDEPCVVRFANPQEGSVVFDDQIRGPIEFSNQELDDLIIRRTDGSPTYNFCVVVDDWDMEITHVIRGEDHINNTPRQINILKALKAPVPVYAHVSMINGDDGKKLSKRHGAVSVMQYRDDGYLPEALLNYLVRLGWSHGDQEIFTREEMIKYFTLNAVSKSASAFNTDKLLWLNHHYINALPPEYVATHLQWHIEQENIDTRNGPQLADLVKLLGERCKTLKEMAQSCRYFYEDFAEFDADAAKKHLRPVARQPLEVVRDKLAAITDWTAENVHHAIQATADELEVGMGKVGMPLRVAVTGAGQSPALDVTVHAIGKTRSIERINKALAFIAERENQQ.

Residues 9–19 (PSPTGYLHVGG) carry the 'HIGH' region motif. Residues C98, C100, C125, and H127 each coordinate Zn(2+). A 'KMSKS' region motif is present at residues 237–241 (KLSKR). Position 240 (K240) interacts with ATP.

This sequence belongs to the class-I aminoacyl-tRNA synthetase family. Glutamate--tRNA ligase type 1 subfamily. As to quaternary structure, monomer. The cofactor is Zn(2+).

It is found in the cytoplasm. The enzyme catalyses tRNA(Glu) + L-glutamate + ATP = L-glutamyl-tRNA(Glu) + AMP + diphosphate. In terms of biological role, catalyzes the attachment of glutamate to tRNA(Glu) in a two-step reaction: glutamate is first activated by ATP to form Glu-AMP and then transferred to the acceptor end of tRNA(Glu). The chain is Glutamate--tRNA ligase from Shigella dysenteriae serotype 1 (strain Sd197).